We begin with the raw amino-acid sequence, 210 residues long: Rho-related GTP-binding protein RhoD (210 aa).

Position 24–31 (24–31 (GDGGCGKT)) interacts with GTP. Residues 46–54 (YTPTVFERY) carry the Effector region motif. GTP contacts are provided by residues 71–75 (DTAGQ) and 129–132 (CKTD). C207 bears the Cysteine methyl ester mark. C207 is lipidated: S-geranylgeranyl cysteine. Residues 208-210 (VVT) constitute a propeptide, removed in mature form.

Belongs to the small GTPase superfamily. Rho family. Interacts (in GTP-bound form) with DIAPH2 isoform 3, DAPK3, FILIP1 and WHAMM. Interacts with PAK5. Interacts (independent of GTP-loaded status) with ANKFY1. Heart, placenta, liver, skeletal muscle, and pancreas and, with weaker intensity, in several other tissues.

Its subcellular location is the cell membrane. It localises to the early endosome. Involved in endosome dynamics. May coordinate membrane transport with the function of the cytoskeleton. Involved in the internalization and trafficking of activated tyrosine kinase receptors such as PDGFRB. Participates in the reorganization of actin cytoskeleton; the function seems to involve WHAMM and includes regulation of filopodia formation and actin filament bundling. Can modulate the effect of DAPK3 in reorganization of actin cytoskeleton and focal adhesion dissolution. The chain is Rho-related GTP-binding protein RhoD from Homo sapiens (Human).